A 72-amino-acid polypeptide reads, in one-letter code: Small ribosomal subunit protein bS20 (72 aa).

The protein belongs to the bacterial ribosomal protein bS20 family.

Its function is as follows. Binds directly to 16S ribosomal RNA. The polypeptide is Small ribosomal subunit protein bS20 (rpsT) (Aeromonas salmonicida).